The following is a 209-amino-acid chain: MELNSLLLLLEAAEYLERRDREAEHGYASMLPFDGDFARKKTKTAGLVRKGPNNRSSHNELEKHRRAKLRLYLEQLKQLGPLGPDSTRHTTLSLLKRAKMHIKKLEEQDRRALSIKEQLQREHRFLKRRLEQLSVQSVERVRTDSTGSAVSTDDSEQEVDIEGMEFGPGELDSAGSSSDADDHYSLQSSGCSDSSYGHPCRRPGCPGLS.

Residues 6–23 (LLLLLEAAEYLERRDREA) form an interaction with SIN3A and SIN3B region. Residues 53-105 (NNRSSHNELEKHRRAKLRLYLEQLKQLGPLGPDSTRHTTLSLLKRAKMHIKKL) enclose the bHLH domain. Residues 137-209 (SVERVRTDST…CRRPGCPGLS (73 aa)) are disordered. The span at 153 to 163 (DDSEQEVDIEG) shows a compositional bias: acidic residues. The segment covering 185-195 (SLQSSGCSDSS) has biased composition (polar residues).

Efficient DNA binding requires dimerization with another bHLH protein. Binds DNA as a heterodimer with MAX. Interacts with SIN3A AND SIN3B. Interacts with RNF17.

Its subcellular location is the nucleus. Functionally, transcriptional repressor. Binds with MAX to form a sequence-specific DNA-binding protein complex which recognizes the core sequence 5'-CAC[GA]TG-3'. Antagonizes MYC transcriptional activity by competing for MAX and suppresses MYC dependent cell transformation. This is Max dimerization protein 4 (Mxd4) from Mus musculus (Mouse).